The chain runs to 389 residues: Succinate--CoA ligase [ADP-forming] subunit beta (389 aa).

One can recognise an ATP-grasp domain in the interval Lys-9–Glu-244. ATP-binding positions include Lys-46, Gly-53–Gly-55, Glu-99, Cys-102, and Glu-107. Residues Asn-199 and Asp-213 each contribute to the Mg(2+) site. Residues Asn-264 and Gly-321–Val-323 contribute to the substrate site.

This sequence belongs to the succinate/malate CoA ligase beta subunit family. In terms of assembly, heterotetramer of two alpha and two beta subunits. Mg(2+) is required as a cofactor.

It catalyses the reaction succinate + ATP + CoA = succinyl-CoA + ADP + phosphate. The enzyme catalyses GTP + succinate + CoA = succinyl-CoA + GDP + phosphate. It participates in carbohydrate metabolism; tricarboxylic acid cycle; succinate from succinyl-CoA (ligase route): step 1/1. Succinyl-CoA synthetase functions in the citric acid cycle (TCA), coupling the hydrolysis of succinyl-CoA to the synthesis of either ATP or GTP and thus represents the only step of substrate-level phosphorylation in the TCA. The beta subunit provides nucleotide specificity of the enzyme and binds the substrate succinate, while the binding sites for coenzyme A and phosphate are found in the alpha subunit. The protein is Succinate--CoA ligase [ADP-forming] subunit beta of Haemophilus influenzae (strain ATCC 51907 / DSM 11121 / KW20 / Rd).